Consider the following 299-residue polypeptide: MDLVLRVADYYFFTPYVYPATWPEDDIFRQAISLLIVTNVGAYILYFFCATLSYYFVFDHALMKHPQFLKNQVRREIKFTVQALPWISILTVALFLLEIRGYSKLHDDLGEFPYGLFELVVSIISFLFFTDMFIYWIHRGLHHRLVYKRLHKPHHIWKIPTPFASHAFHPIDGFLQSLPYHIYPFIFPLHKVVYLSLYILVNIWTISIHDGDFRVPQILQPFINGSAHHTDHHMFFDYNYGQYFTLWDRIGGSFKNPSSFEGKGPLSYVKEMTEGKRSSHSGNGCKNEKLFNGEFTKTE.

A run of 3 helical transmembrane segments spans residues 32-52 (ISLL…CATL), 79-99 (FTVQ…LLEI), and 117-137 (FELV…IYWI). The Fatty acid hydroxylase domain maps to 124–252 (ISFLFFTDMF…YFTLWDRIGG (129 aa)). Positions 138 to 143 (HRGLHH) match the Histidine box-1 motif. The Histidine box-2 motif lies at 151–155 (HKPHH). A helical transmembrane segment spans residues 186–206 (IFPLHKVVYLSLYILVNIWTI). Positions 228–233 (HHTDHH) match the Histidine box-3 motif. Ser253 carries the post-translational modification Phosphoserine. Residues 274–299 (EGKRSSHSGNGCKNEKLFNGEFTKTE) are disordered. Basic and acidic residues predominate over residues 286–299 (KNEKLFNGEFTKTE).

This sequence belongs to the sterol desaturase family. It depends on Fe cation as a cofactor.

The protein resides in the endoplasmic reticulum membrane. It catalyses the reaction a Delta(7)-sterol + 2 Fe(II)-[cytochrome b5] + O2 + 2 H(+) = a Delta(5),Delta(7)-sterol + 2 Fe(III)-[cytochrome b5] + 2 H2O. The enzyme catalyses lathosterol + 2 Fe(II)-[cytochrome b5] + O2 + 2 H(+) = 7-dehydrocholesterol + 2 Fe(III)-[cytochrome b5] + 2 H2O. It carries out the reaction 5alpha-cholesta-7,24-dien-3beta-ol + 2 Fe(II)-[cytochrome b5] + O2 + 2 H(+) = 7-dehydrodesmosterol + 2 Fe(III)-[cytochrome b5] + 2 H2O. It participates in steroid biosynthesis; cholesterol biosynthesis. Functionally, catalyzes the penultimate step of the biosynthesis of cholesterol, the dehydrogenation of lathosterol into 7-dehydrocholesterol (7-DHC). Cholesterol is the major sterol component in mammalian membranes and a precursor for bile acid and steroid hormone synthesis. In addition to its essential role in cholesterol biosynthesis, it also indirectly regulates ferroptosis through the production of 7-DHC. By diverting the spread of damage caused by peroxyl radicals from the phospholipid components to its sterol nucleus, 7-DHC prevents this form of cell death. This is Lathosterol oxidase from Homo sapiens (Human).